Here is a 360-residue protein sequence, read N- to C-terminus: S-adenosylmethionine:tRNA ribosyltransferase-isomerase (360 aa).

Belongs to the QueA family. As to quaternary structure, monomer.

The protein resides in the cytoplasm. The catalysed reaction is 7-aminomethyl-7-carbaguanosine(34) in tRNA + S-adenosyl-L-methionine = epoxyqueuosine(34) in tRNA + adenine + L-methionine + 2 H(+). Its pathway is tRNA modification; tRNA-queuosine biosynthesis. Transfers and isomerizes the ribose moiety from AdoMet to the 7-aminomethyl group of 7-deazaguanine (preQ1-tRNA) to give epoxyqueuosine (oQ-tRNA). The polypeptide is S-adenosylmethionine:tRNA ribosyltransferase-isomerase (Rhizobium meliloti (strain 1021) (Ensifer meliloti)).